Reading from the N-terminus, the 194-residue chain is ATP-dependent Clp protease proteolytic subunit (194 aa).

Residue serine 98 is the Nucleophile of the active site. Residue histidine 123 is part of the active site.

It belongs to the peptidase S14 family. As to quaternary structure, fourteen ClpP subunits assemble into 2 heptameric rings which stack back to back to give a disk-like structure with a central cavity, resembling the structure of eukaryotic proteasomes.

It is found in the cytoplasm. It catalyses the reaction Hydrolysis of proteins to small peptides in the presence of ATP and magnesium. alpha-casein is the usual test substrate. In the absence of ATP, only oligopeptides shorter than five residues are hydrolyzed (such as succinyl-Leu-Tyr-|-NHMec, and Leu-Tyr-Leu-|-Tyr-Trp, in which cleavage of the -Tyr-|-Leu- and -Tyr-|-Trp bonds also occurs).. In terms of biological role, cleaves peptides in various proteins in a process that requires ATP hydrolysis. Has a chymotrypsin-like activity. Plays a major role in the degradation of misfolded proteins. This chain is ATP-dependent Clp protease proteolytic subunit, found in Syntrophus aciditrophicus (strain SB).